We begin with the raw amino-acid sequence, 88 residues long: Small ribosomal subunit protein uS15 (88 aa).

Belongs to the universal ribosomal protein uS15 family. As to quaternary structure, part of the 30S ribosomal subunit. Forms a bridge to the 50S subunit in the 70S ribosome, contacting the 23S rRNA.

Its function is as follows. One of the primary rRNA binding proteins, it binds directly to 16S rRNA where it helps nucleate assembly of the platform of the 30S subunit by binding and bridging several RNA helices of the 16S rRNA. Functionally, forms an intersubunit bridge (bridge B4) with the 23S rRNA of the 50S subunit in the ribosome. The chain is Small ribosomal subunit protein uS15 from Leptospira borgpetersenii serovar Hardjo-bovis (strain JB197).